Consider the following 145-residue polypeptide: D-aminoacyl-tRNA deacylase (145 aa).

The Gly-cisPro motif, important for rejection of L-amino acids signature appears at 137 to 138; sequence GP.

The protein belongs to the DTD family. As to quaternary structure, homodimer.

The protein resides in the cytoplasm. It catalyses the reaction glycyl-tRNA(Ala) + H2O = tRNA(Ala) + glycine + H(+). The catalysed reaction is a D-aminoacyl-tRNA + H2O = a tRNA + a D-alpha-amino acid + H(+). Its function is as follows. An aminoacyl-tRNA editing enzyme that deacylates mischarged D-aminoacyl-tRNAs. Also deacylates mischarged glycyl-tRNA(Ala), protecting cells against glycine mischarging by AlaRS. Acts via tRNA-based rather than protein-based catalysis; rejects L-amino acids rather than detecting D-amino acids in the active site. By recycling D-aminoacyl-tRNA to D-amino acids and free tRNA molecules, this enzyme counteracts the toxicity associated with the formation of D-aminoacyl-tRNA entities in vivo and helps enforce protein L-homochirality. This chain is D-aminoacyl-tRNA deacylase, found in Streptomyces avermitilis (strain ATCC 31267 / DSM 46492 / JCM 5070 / NBRC 14893 / NCIMB 12804 / NRRL 8165 / MA-4680).